Consider the following 254-residue polypeptide: NAD kinase (254 aa).

The active-site Proton acceptor is Asp44. NAD(+)-binding positions include 44–45 (DG), 114–115 (NE), Asp144, Ala152, 155–160 (TAYNYS), and Ala179.

The protein belongs to the NAD kinase family. Requires a divalent metal cation as cofactor.

Its subcellular location is the cytoplasm. It catalyses the reaction NAD(+) + ATP = ADP + NADP(+) + H(+). In terms of biological role, involved in the regulation of the intracellular balance of NAD and NADP, and is a key enzyme in the biosynthesis of NADP. Catalyzes specifically the phosphorylation on 2'-hydroxyl of the adenosine moiety of NAD to yield NADP. In Cereibacter sphaeroides (strain ATCC 17029 / ATH 2.4.9) (Rhodobacter sphaeroides), this protein is NAD kinase.